The following is a 1082-amino-acid chain: Carbamoyl phosphate synthase large chain (1082 aa).

A carboxyphosphate synthetic domain region spans residues methionine 1–glutamate 401. ATP contacts are provided by arginine 129, arginine 169, glycine 175, glycine 176, lysine 208, valine 210, glutamate 215, glycine 241, isoleucine 242, histidine 243, glutamine 284, and glutamate 298. In terms of domain architecture, ATP-grasp 1 spans lysine 133–valine 327. Mg(2+)-binding residues include glutamine 284, glutamate 298, and asparagine 300. 3 residues coordinate Mn(2+): glutamine 284, glutamate 298, and asparagine 300. An oligomerization domain region spans residues threonine 402–alanine 561. The tract at residues glutamate 562–glycine 944 is carbamoyl phosphate synthetic domain. Residues aspartate 686–leucine 876 form the ATP-grasp 2 domain. Residues arginine 722, lysine 761, leucine 763, glutamate 767, glycine 792, isoleucine 793, histidine 794, serine 795, glutamine 835, and glutamate 847 each coordinate ATP. The Mg(2+) site is built by glutamine 835, glutamate 847, and asparagine 849. Residues glutamine 835, glutamate 847, and asparagine 849 each coordinate Mn(2+). The region spanning tyrosine 945 to serine 1082 is the MGS-like domain. Positions tyrosine 945–serine 1082 are allosteric domain.

This sequence belongs to the CarB family. As to quaternary structure, composed of two chains; the small (or glutamine) chain promotes the hydrolysis of glutamine to ammonia, which is used by the large (or ammonia) chain to synthesize carbamoyl phosphate. Tetramer of heterodimers (alpha,beta)4. Requires Mg(2+) as cofactor. It depends on Mn(2+) as a cofactor.

It carries out the reaction hydrogencarbonate + L-glutamine + 2 ATP + H2O = carbamoyl phosphate + L-glutamate + 2 ADP + phosphate + 2 H(+). The catalysed reaction is hydrogencarbonate + NH4(+) + 2 ATP = carbamoyl phosphate + 2 ADP + phosphate + 2 H(+). It participates in amino-acid biosynthesis; L-arginine biosynthesis; carbamoyl phosphate from bicarbonate: step 1/1. It functions in the pathway pyrimidine metabolism; UMP biosynthesis via de novo pathway; (S)-dihydroorotate from bicarbonate: step 1/3. Its function is as follows. Large subunit of the glutamine-dependent carbamoyl phosphate synthetase (CPSase). CPSase catalyzes the formation of carbamoyl phosphate from the ammonia moiety of glutamine, carbonate, and phosphate donated by ATP, constituting the first step of 2 biosynthetic pathways, one leading to arginine and/or urea and the other to pyrimidine nucleotides. The large subunit (synthetase) binds the substrates ammonia (free or transferred from glutamine from the small subunit), hydrogencarbonate and ATP and carries out an ATP-coupled ligase reaction, activating hydrogencarbonate by forming carboxy phosphate which reacts with ammonia to form carbamoyl phosphate. The protein is Carbamoyl phosphate synthase large chain of Desulforudis audaxviator (strain MP104C).